Consider the following 254-residue polypeptide: Serotonin N-acetyltransferase 1, chloroplastic (254 aa).

Residues 1–83 (MASAASASAS…NSTETVEPPS (83 aa)) constitute a chloroplast transit peptide. An N-acetyltransferase domain is found at 119–254 (VNVYDLQALC…IKGMFWYPRF (136 aa)).

It is found in the plastid. The protein resides in the chloroplast. The protein localises to the nucleus. The enzyme catalyses a 2-arylethylamine + acetyl-CoA = an N-acetyl-2-arylethylamine + CoA + H(+). It functions in the pathway aromatic compound metabolism; melatonin biosynthesis; melatonin from serotonin: step 1/2. In terms of biological role, catalyzes the N-acetylation of serotonin into N-acetylserotonin, the penultimate step in the synthesis of melatonin. Catalyzes in vitro the N-acetylation of tryptamine to produce N-acetyltryptamine, 5-methoxytryptamine to produce melatonin and tyramine to produce N-acetyltyramine. Acetyltransferase required for geminivirus infection and systemic spread. This is Serotonin N-acetyltransferase 1, chloroplastic from Oryza sativa subsp. indica (Rice).